The chain runs to 320 residues: Aminoacyl tRNA synthase complex-interacting multifunctional protein 2 (320 aa).

Residues 82–162 (TPDADLDVTN…HTHSSVKSVP (81 aa)) are interaction with PRKN. An interaction with TP53 region spans residues 162-225 (PENLLKCFGE…FLFSLFGQKH (64 aa)). The 98-residue stretch at 220-317 (LFGQKHNAVN…NLAPFNTALK (98 aa)) folds into the GST C-terminal domain.

In terms of assembly, part of the multisynthetase complex (MSC), a multisubunit complex that groups tRNA ligases for Arg (RARS1), Asp (DARS1), Gln (QARS1), Ile (IARS1), Leu (LARS1), Lys (KARS1), Met (MARS1) the bifunctional ligase for Glu and Pro (EPRS1) and the auxiliary subunits AIMP1/p43, AIMP2/p38 and EEF1E1/p18. Interacts (via N-terminus) with KARS1. Interacts with EPRS1. Forms a linear complex that contains MARS1, EEF1E1, EPRS1 and AIMP2 that is at the core of the multisubunit complex. Binds FUBP1 (via C-terminus). Interacts in both its unphosphorylated and phosphorylated forms with p53/TP53 (via N-terminus) in the nucleus following UV irradiation. Interacts (via N-terminus) with PRKN/parkin (via first RING-type domain). Interacts with TARS3. In terms of processing, phosphorylated on serine residues in response to UV irradiation. Ubiquitinated by PRKN, leading to its degradation by the proteasome. Mutant PRKN fails to ubiquitinate AIMP2 efficiently, allowing its accumulation which may contribute to neurodegeneration associated with Parkinson disease.

It is found in the cytoplasm. It localises to the cytosol. The protein resides in the nucleus. Functionally, required for assembly and stability of the aminoacyl-tRNA synthase complex. Mediates ubiquitination and degradation of FUBP1, a transcriptional activator of MYC, leading to MYC down-regulation which is required for aveolar type II cell differentiation. Blocks MDM2-mediated ubiquitination and degradation of p53/TP53. Functions as a proapoptotic factor. The protein is Aminoacyl tRNA synthase complex-interacting multifunctional protein 2 (AIMP2) of Homo sapiens (Human).